The primary structure comprises 121 residues: Putative iron-sulfur cluster insertion protein ErpA 1 (121 aa).

3 residues coordinate iron-sulfur cluster: Cys-49, Cys-113, and Cys-115.

The protein belongs to the HesB/IscA family. In terms of assembly, homodimer. The cofactor is iron-sulfur cluster.

In terms of biological role, required for insertion of 4Fe-4S clusters. The polypeptide is Putative iron-sulfur cluster insertion protein ErpA 1 (Polaromonas naphthalenivorans (strain CJ2)).